The chain runs to 411 residues: MTAQTPIHVYSEIGKLKKVLLHRPGKEIENLMPDYLERLLFDDIPFLEDAQKEHDAFAQALRDEGIEVLYLETLAAESLVTPEIREAFIDEYLSEANIRGRATKKAIRELLMAIEDNQELIEKTMAGVQKSELPEIPASEKGLTDLVESNYPFAIDPMPNLYFTRDPFATIGTGVSLNHMFSETRNRETLYGKYIFTHHPIYGGGKVPMVYDRNETTRIEGGDELVLSKDVLAVGISQRTDAASIEKLLVNIFKQNLGFKKVLAFEFANNRKFMHLDTVFTMVDYDKFTIHPEIEGDLRVYSVTYDNEELHIVEEKGDLAELLAANLGVEKVDLIRCGGDNLVAAGREQWNDGSNTLTIAPGVVVVYNRNTITNAILESKGLKLIKIHGSELVRGRGGPRCMSMPFEREDI.

The active-site Amidino-cysteine intermediate is the cysteine 401.

The protein belongs to the arginine deiminase family. In terms of processing, glycosylated.

It localises to the cytoplasm. It catalyses the reaction L-arginine + H2O = L-citrulline + NH4(+). The protein operates within amino-acid degradation; L-arginine degradation via ADI pathway; carbamoyl phosphate from L-arginine: step 1/2. The protein is Arginine deiminase (arcA) of Streptococcus pyogenes serotype M1.